The sequence spans 216 residues: Glycerol-3-phosphate acyltransferase (216 aa).

The next 5 helical transmembrane spans lie at 4–24 (TIIGLILAYLLGSIPTGLWIG), 71–91 (LPFFLHIEGVSPLVFGLLAVI), 113–133 (VVLGFSPAFFVYLIVIFASIL), 144–164 (VLSAVIAILSALLFPLVGFIL), and 165–185 (PSYDLFFTLIIIALALIIILR).

Belongs to the PlsY family. In terms of assembly, probably interacts with PlsX.

The protein resides in the cell membrane. The catalysed reaction is an acyl phosphate + sn-glycerol 3-phosphate = a 1-acyl-sn-glycero-3-phosphate + phosphate. Its pathway is lipid metabolism; phospholipid metabolism. Functionally, catalyzes the transfer of an acyl group from acyl-phosphate (acyl-PO(4)) to glycerol-3-phosphate (G3P) to form lysophosphatidic acid (LPA). This enzyme utilizes acyl-phosphate as fatty acyl donor, but not acyl-CoA or acyl-ACP. The protein is Glycerol-3-phosphate acyltransferase of Streptococcus sanguinis (strain SK36).